The chain runs to 58 residues: UPF0337 protein OB2685 (58 aa).

Basic and acidic residues-rich tracts occupy residues 1–22 (MSDG…EAKD) and 30–46 (DPQR…KGEA). Residues 1-58 (MSDGMKDKAKAIGKKIKGEAKDQWGSATDDPQRKAEGKRDKAKGEAQDTIADAKNNNK) form a disordered region.

Belongs to the UPF0337 (CsbD) family.

The sequence is that of UPF0337 protein OB2685 from Oceanobacillus iheyensis (strain DSM 14371 / CIP 107618 / JCM 11309 / KCTC 3954 / HTE831).